The following is an 81-amino-acid chain: Photosystem I iron-sulfur center (81 aa).

2 4Fe-4S ferredoxin-type domains span residues 2–31 (SHSV…MIPW) and 39–68 (IASA…VRVY). [4Fe-4S] cluster is bound by residues Cys11, Cys14, Cys17, Cys21, Cys48, Cys51, Cys54, and Cys58.

In terms of assembly, the eukaryotic PSI reaction center is composed of at least 11 subunits. Requires [4Fe-4S] cluster as cofactor.

It is found in the plastid. Its subcellular location is the chloroplast thylakoid membrane. It catalyses the reaction reduced [plastocyanin] + hnu + oxidized [2Fe-2S]-[ferredoxin] = oxidized [plastocyanin] + reduced [2Fe-2S]-[ferredoxin]. Functionally, apoprotein for the two 4Fe-4S centers FA and FB of photosystem I (PSI); essential for photochemical activity. FB is the terminal electron acceptor of PSI, donating electrons to ferredoxin. The C-terminus interacts with PsaA/B/D and helps assemble the protein into the PSI complex. Required for binding of PsaD and PsaE to PSI. PSI is a plastocyanin-ferredoxin oxidoreductase, converting photonic excitation into a charge separation, which transfers an electron from the donor P700 chlorophyll pair to the spectroscopically characterized acceptors A0, A1, FX, FA and FB in turn. In Phaseolus vulgaris (Kidney bean), this protein is Photosystem I iron-sulfur center.